Here is a 335-residue protein sequence, read N- to C-terminus: MAVTNLPTCDGLFIISLIVIVSSIFGTSSAQLNATFYSGTCPNASAIVRSTIQQALQSDTRIGASLIRLHFHDCFVNGCDASILLDDTGSIQSEKNAGPNVNSARGFNVVDNIKTALENACPGVVSCSDVLALASEASVSLAGGPSWTVLLGRRDSLTANLAGANSSIPSPIESLSNITFKFSAVGLNTNDLVALSGAHTFGRARCGVFNNRLFNFSGTGNPDPTLNSTLLSTLQQLCPQNGSASTITNLDLSTPDAFDNNYFANLQSNDGLLQSDQELFSTTGSSTIAIVTSFASNQTLFFQAFAQSMINMGNISPLTGSNGEIRLDCKKVNGS.

Positions 1-30 (MAVTNLPTCDGLFIISLIVIVSSIFGTSSA) are cleaved as a signal peptide. A Pyrrolidone carboxylic acid modification is found at Gln-31. N-linked (GlcNAc...) asparagine glycans are attached at residues Asn-33 and Asn-43. Disulfide bonds link Cys-41–Cys-121, Cys-74–Cys-79, Cys-127–Cys-329, and Cys-206–Cys-238. Residue His-72 is the Proton acceptor of the active site. Ca(2+)-binding residues include Asp-73, Val-76, Gly-78, Asp-80, and Ser-82. A glycan (N-linked (GlcNAc...) asparagine) is linked at Asn-165. Residue Pro-169 coordinates substrate. Residue Asn-177 is glycosylated (N-linked (GlcNAc...) asparagine). Position 199 (His-199) interacts with heme b. A Ca(2+)-binding site is contributed by Thr-200. Asn-215, Asn-227, and Asn-241 each carry an N-linked (GlcNAc...) asparagine glycan. 3 residues coordinate Ca(2+): Asp-251, Thr-254, and Asp-259. An N-linked (GlcNAc...) asparagine glycan is attached at Asn-297.

The protein belongs to the peroxidase family. Classical plant (class III) peroxidase subfamily. Ca(2+) serves as cofactor. Requires heme b as cofactor. Mainly expressed in roots.

Its subcellular location is the secreted. It catalyses the reaction 2 a phenolic donor + H2O2 = 2 a phenolic radical donor + 2 H2O. In terms of biological role, removal of H(2)O(2), oxidation of toxic reductants, biosynthesis and degradation of lignin, suberization, auxin catabolism, response to environmental stresses such as wounding, pathogen attack and oxidative stress. These functions might be dependent on each isozyme/isoform in each plant tissue. Closely linked to lignin formation by showing monolignol substrate specificity. The chain is Peroxidase 53 (PER53) from Arabidopsis thaliana (Mouse-ear cress).